The sequence spans 182 residues: Large ribosomal subunit protein bL25 (182 aa).

It belongs to the bacterial ribosomal protein bL25 family. CTC subfamily. Part of the 50S ribosomal subunit; part of the 5S rRNA/L5/L18/L25 subcomplex. Contacts the 5S rRNA. Binds to the 5S rRNA independently of L5 and L18.

Its function is as follows. This is one of the proteins that binds to the 5S RNA in the ribosome where it forms part of the central protuberance. This is Large ribosomal subunit protein bL25 from Borreliella afzelii (strain PKo) (Borrelia afzelii).